We begin with the raw amino-acid sequence, 345 residues long: Serine/arginine-rich splicing factor 6 (345 aa).

Positions 1–72 constitute an RRM 1 domain; the sequence is MPRVYIGRLS…ERVIVEHARG (72 aa). S45, S81, and S84 each carry phosphoserine. Residues 75-102 are disordered; the sequence is RDRDGYSYGSRSGGGGYSSRRTSGRDKY. Residues 110–183 form the RRM 2 domain; that stretch reads FRLIVENLSS…RNIRLIEDKP (74 aa). K165 carries the N6-acetyllysine modification. The disordered stretch occupies residues 176–345; sequence IRLIEDKPRT…RSRSRSSSRD (170 aa). K182 is covalently cross-linked (Glycyl lysine isopeptide (Lys-Gly) (interchain with G-Cter in SUMO2)). Over residues 185–250 the composition is skewed to basic residues; that stretch reads TSHRRSYSGS…RKSRSKSKSK (66 aa). Basic and acidic residues-rich tracts occupy residues 264–273 and 282–293; these read RSKDEYEKSR and SPKENGKGDIKS. A phosphoserine mark is found at S299 and S301. At S305 the chain carries Phosphoserine; by DYRK1A. S316 and S318 each carry phosphoserine. Positions 323 to 345 are enriched in basic residues; that stretch reads RASRSHSRSRSKSRSRSRSSSRD.

It belongs to the splicing factor SR family. As to quaternary structure, binds SREK1/SFRS12. Interacts with DYRK1A. Post-translationally, extensively phosphorylated on serine residues in the RS domain. Phosphorylated by DYRK1A, probably in the RS domain. Phosphorylation by DYRK1A modulates alternative splice site selection and inhibits the expression of MAPT/Tau exon 10.

The protein localises to the nucleus. The protein resides in the nucleus speckle. In terms of biological role, plays a role in constitutive splicing and modulates the selection of alternative splice sites. Plays a role in the alternative splicing of MAPT/Tau exon 10. Binds to alternative exons of TNC pre-mRNA and promotes the expression of alternatively spliced TNC. Plays a role in wound healing and in the regulation of keratinocyte differentiation and proliferation via its role in alternative splicing. The polypeptide is Serine/arginine-rich splicing factor 6 (SRSF6) (Bos taurus (Bovine)).